The sequence spans 30 residues: Snaclec coagulation factor IX/factor X-binding protein subunit B (30 aa).

Cys-2 and Cys-13 are oxidised to a cystine. Residues 9 to 30 (YEGHCYRVFTEPQNWADAEKFC) enclose the C-type lectin domain.

Belongs to the snaclec family. As to quaternary structure, heterodimer of subunits A and B; disulfide-linked. Glycosylated. In terms of tissue distribution, expressed by the venom gland.

Its subcellular location is the secreted. Its function is as follows. Anticoagulant protein which binds to the gamma-carboxyglutamic acid-domain regions of factors IX (F9) and factor X (F10) in the presence of calcium with a 1 to 1 stoichiometry. The chain is Snaclec coagulation factor IX/factor X-binding protein subunit B from Bothrops jararaca (Jararaca).